The chain runs to 624 residues: Probable potassium transport system protein Kup 1 (624 aa).

12 helical membrane passes run 10–30 (LALG…LYAL), 48–68 (LSLI…MIIF), 94–114 (PLFY…GMLT), 133–153 (LYPY…SLQA), 159–179 (IGYL…ILGI), 210–230 (FLLG…ADIG), 242–262 (FFIA…NLIV), 270–290 (PFFM…ATVA), 331–351 (IYVP…CLAF), 363–383 (IAVN…AVSI), 388–408 (TFNV…FLGA), and 413–433 (FITG…IMYS).

This sequence belongs to the HAK/KUP transporter (TC 2.A.72) family.

It localises to the cell inner membrane. It catalyses the reaction K(+)(in) + H(+)(in) = K(+)(out) + H(+)(out). Functionally, transport of potassium into the cell. Likely operates as a K(+):H(+) symporter. This Legionella pneumophila subsp. pneumophila (strain Philadelphia 1 / ATCC 33152 / DSM 7513) protein is Probable potassium transport system protein Kup 1.